Consider the following 101-residue polypeptide: Protein S100-A4 (101 aa).

An N-acetylalanine modification is found at alanine 2. Position 7 is an N6-acetyllysine (lysine 7). EF-hand domains follow at residues 13–48 (VSTF…FLGK) and 50–85 (TDET…IAMM). Ca(2+)-binding residues include lysine 28 and glutamate 33. The residue at position 35 (lysine 35) is an N6-acetyllysine. 5 residues coordinate Ca(2+): aspartate 63, asparagine 65, aspartate 67, glutamate 69, and glutamate 74.

Belongs to the S-100 family. As to quaternary structure, homodimer. Interacts with PPFIBP1 in a calcium-dependent mode. Interacts with PGLYRP1; this complex acts as a chemoattractant that promotes lymphocyte movement. Interacts with MYH9; this interaction increases cell motility. Interacts with Annexin 2/ANXA2. Interacts with TP53; this interaction promotes TP53 degradation. Interacts with CCR5 and CXCR3. Interacts with FCGR3A; this interaction inhibits PKC-dependent phosphorylation of FCGR3A.

It localises to the secreted. It is found in the nucleus. The protein localises to the cytoplasm. Calcium-binding protein that plays a role in various cellular processes including motility, angiogenesis, cell differentiation, apoptosis, and autophagy. Increases cell motility and invasiveness by interacting with non-muscle myosin heavy chain (NMMHC) IIA/MYH9. Mechanistically, promotes filament depolymerization and increases the amount of soluble myosin-IIA, resulting in the formation of stable protrusions facilitating chemotaxis. Also modulates the pro-apoptotic function of TP53 by binding to its C-terminal transactivation domain within the nucleus and reducing its protein levels. Within the extracellular space, stimulates cytokine production including granulocyte colony-stimulating factor and CCL24 from T-lymphocytes. In addition, stimulates T-lymphocyte chemotaxis by acting as a chemoattractant complex with PGLYRP1 that promotes lymphocyte migration via CCR5 and CXCR3 receptors. This chain is Protein S100-A4 (S100A4), found in Bos taurus (Bovine).